Consider the following 325-residue polypeptide: Protein FAM50B (325 aa).

An N-acetylalanine modification is found at alanine 2. Residues 137 to 160 (RRAGNLGKNPDVDTSFLPDRDREE) are disordered.

Belongs to the FAM50 family.

This Macaca fascicularis (Crab-eating macaque) protein is Protein FAM50B (FAM50B).